A 140-amino-acid chain; its full sequence is Cystatin-C (140 aa).

An N-terminal signal peptide occupies residues 1–20 (MASPLRSLLFLLAVLAVAWA). The Secondary area of contact motif lies at 75–79 (QLVAG). Intrachain disulfides connect cysteine 93-cysteine 103 and cysteine 117-cysteine 137.

It belongs to the cystatin family.

The protein localises to the secreted. As an inhibitor of cysteine proteinases, this protein is thought to serve an important physiological role as a local regulator of this enzyme activity. The polypeptide is Cystatin-C (Cst3) (Mus musculus (Mouse)).